The following is a 131-amino-acid chain: Leptin receptor gene-related protein (131 aa).

4 consecutive transmembrane segments (helical) span residues 7 to 27 (LVAL…GCAL), 32 to 52 (VYWP…HFIA), 69 to 89 (LAYF…VILA), and 100 to 120 (GLVL…FLIF).

Belongs to the OB-RGRP/VPS55 family. As to quaternary structure, interacts with LEPR. Interacts with RAB13. Expressed at the highest levels in heart and placenta and at a lesser extent in lung, liver, skeletal muscle, kidney and pancreas.

The protein resides in the golgi apparatus membrane. Its subcellular location is the endosome membrane. Negatively regulates leptin receptor (LEPR) cell surface expression, and thus decreases response to leptin. Negatively regulates growth hormone (GH) receptor cell surface expression in liver. May play a role in liver resistance to GH during periods of reduced nutrient availability. In Homo sapiens (Human), this protein is Leptin receptor gene-related protein (LEPROT).